The following is a 274-amino-acid chain: Thiazole synthase (274 aa).

Lys-111 functions as the Schiff-base intermediate with DXP in the catalytic mechanism. 1-deoxy-D-xylulose 5-phosphate-binding positions include Gly-172, 198–199 (AG), and 220–221 (NT).

It belongs to the ThiG family. Homotetramer. Forms heterodimers with either ThiH or ThiS.

The protein resides in the cytoplasm. The catalysed reaction is [ThiS sulfur-carrier protein]-C-terminal-Gly-aminoethanethioate + 2-iminoacetate + 1-deoxy-D-xylulose 5-phosphate = [ThiS sulfur-carrier protein]-C-terminal Gly-Gly + 2-[(2R,5Z)-2-carboxy-4-methylthiazol-5(2H)-ylidene]ethyl phosphate + 2 H2O + H(+). It participates in cofactor biosynthesis; thiamine diphosphate biosynthesis. Functionally, catalyzes the rearrangement of 1-deoxy-D-xylulose 5-phosphate (DXP) to produce the thiazole phosphate moiety of thiamine. Sulfur is provided by the thiocarboxylate moiety of the carrier protein ThiS. In vitro, sulfur can be provided by H(2)S. The sequence is that of Thiazole synthase from Gloeobacter violaceus (strain ATCC 29082 / PCC 7421).